Here is a 622-residue protein sequence, read N- to C-terminus: Modification methylase LlaI (622 aa).

The protein belongs to the N(4)/N(6)-methyltransferase family.

The catalysed reaction is a 2'-deoxyadenosine in DNA + S-adenosyl-L-methionine = an N(6)-methyl-2'-deoxyadenosine in DNA + S-adenosyl-L-homocysteine + H(+). Its function is as follows. An alpha subtype methylase that modifies unknown specific adenine residues, and protects the DNA from cleavage by the LlaI endonuclease. The polypeptide is Modification methylase LlaI (Lactococcus lactis subsp. lactis (Streptococcus lactis)).